The following is a 143-amino-acid chain: Phosphoprotein 32 (143 aa).

A compositionally biased stretch (polar residues) spans 1–14 (MESSNINALQQPSS). The segment at 1–32 (MESSNINALQQPSSIAHHPSKQCASSLNETVK) is disordered.

This sequence belongs to the varicellovirus ORF32 protein family. Phosphorylated by ORF47 protein.

This is Phosphoprotein 32 from Homo sapiens (Human).